The chain runs to 172 residues: Large ribosomal subunit protein uL10 (172 aa).

The protein belongs to the universal ribosomal protein uL10 family. Part of the ribosomal stalk of the 50S ribosomal subunit. The N-terminus interacts with L11 and the large rRNA to form the base of the stalk. The C-terminus forms an elongated spine to which L12 dimers bind in a sequential fashion forming a multimeric L10(L12)X complex.

Its function is as follows. Forms part of the ribosomal stalk, playing a central role in the interaction of the ribosome with GTP-bound translation factors. The protein is Large ribosomal subunit protein uL10 of Chlorobium phaeobacteroides (strain DSM 266 / SMG 266 / 2430).